Consider the following 82-residue polypeptide: Diptericin-A (82 aa).

Disordered regions lie at residues 1–32 (DEKP…DGFG) and 45–69 (DNGG…GNSR). Phenylalanine 82 bears the Phenylalanine amide mark.

It belongs to the attacin/sarcotoxin-2 family.

It is found in the secreted. In terms of biological role, antimicrobial peptide required to resist Gram-negative bacterial infections, regulated by Dredd. The polypeptide is Diptericin-A (Protophormia terraenovae (Northern blowfly)).